The primary structure comprises 427 residues: Trigger factor (427 aa).

One can recognise a PPIase FKBP-type domain in the interval 160-240 (TDTVIGDVVK…VKEVKRLELP (81 aa)).

Belongs to the FKBP-type PPIase family. Tig subfamily.

It is found in the cytoplasm. It carries out the reaction [protein]-peptidylproline (omega=180) = [protein]-peptidylproline (omega=0). In terms of biological role, involved in protein export. Acts as a chaperone by maintaining the newly synthesized protein in an open conformation. Functions as a peptidyl-prolyl cis-trans isomerase. The sequence is that of Trigger factor from Chlorobium limicola (strain DSM 245 / NBRC 103803 / 6330).